We begin with the raw amino-acid sequence, 412 residues long: Peptidase T (412 aa).

His81 is a binding site for Zn(2+). Asp83 is a catalytic residue. Residue Asp144 participates in Zn(2+) binding. Glu178 acts as the Proton acceptor in catalysis. The Zn(2+) site is built by Glu179, Asp201, and His383.

The protein belongs to the peptidase M20B family. The cofactor is Zn(2+).

The protein localises to the cytoplasm. It carries out the reaction Release of the N-terminal residue from a tripeptide.. Cleaves the N-terminal amino acid of tripeptides. In Bacillus cereus (strain ZK / E33L), this protein is Peptidase T.